The sequence spans 249 residues: 5'-nucleotidase SurE (249 aa).

Residues Asp-8, Asp-9, Ser-39, and Asn-91 each contribute to the a divalent metal cation site.

Belongs to the SurE nucleotidase family. The cofactor is a divalent metal cation.

The protein resides in the cytoplasm. The catalysed reaction is a ribonucleoside 5'-phosphate + H2O = a ribonucleoside + phosphate. Functionally, nucleotidase that shows phosphatase activity on nucleoside 5'-monophosphates. The chain is 5'-nucleotidase SurE from Pseudomonas fluorescens (strain SBW25).